Here is a 606-residue protein sequence, read N- to C-terminus: NADH-ubiquinone oxidoreductase chain 5 (606 aa).

The next 16 helical transmembrane spans lie at 4–24, 38–58, 87–107, 114–134, 140–160, 171–191, 213–233, 241–261, 273–293, 301–320, 325–347, 366–386, 409–429, 457–477, 488–508, and 583–603; these read FPSL…TTTI, NIIS…IHSG, MIFV…SMWY, ITQF…LVTA, LFIG…WWYG, AILY…WFLF, LMGL…HPWL, TPVS…FLLI, VQTF…ICAL, IIAF…IGIN, AFLH…GSII, MPFT…MPFL, LLIT…MIFF, LLIG…PTTI, LTAL…SLAT, and LIKL…LLLM.

The protein belongs to the complex I subunit 5 family. Core subunit of respiratory chain NADH dehydrogenase (Complex I) which is composed of 45 different subunits.

It is found in the mitochondrion inner membrane. The catalysed reaction is a ubiquinone + NADH + 5 H(+)(in) = a ubiquinol + NAD(+) + 4 H(+)(out). Core subunit of the mitochondrial membrane respiratory chain NADH dehydrogenase (Complex I) which catalyzes electron transfer from NADH through the respiratory chain, using ubiquinone as an electron acceptor. Essential for the catalytic activity and assembly of complex I. The protein is NADH-ubiquinone oxidoreductase chain 5 (MT-ND5) of Ceratotherium simum (White rhinoceros).